Consider the following 101-residue polypeptide: uncharacterized protein (101 aa).

Positions 1–25 (MISIPFRSTMSRTLVFIILPTVLSC) are cleaved as a signal peptide.

This is an uncharacterized protein from Saccharomyces cerevisiae (strain ATCC 204508 / S288c) (Baker's yeast).